We begin with the raw amino-acid sequence, 1193 residues long: DNA-directed RNA polymerase subunit beta (1193 aa).

Residues 1152-1161 (IEMRDLEDDE) are compositionally biased toward acidic residues. A disordered region spans residues 1152-1193 (IEMRDLEDDEETKKADGLALSNDEDAADLAPVDLERDAVTKE). Positions 1184-1193 (DLERDAVTKE) are enriched in basic and acidic residues.

Belongs to the RNA polymerase beta chain family. As to quaternary structure, the RNAP catalytic core consists of 2 alpha, 1 beta, 1 beta' and 1 omega subunit. When a sigma factor is associated with the core the holoenzyme is formed, which can initiate transcription.

The enzyme catalyses RNA(n) + a ribonucleoside 5'-triphosphate = RNA(n+1) + diphosphate. Its function is as follows. DNA-dependent RNA polymerase catalyzes the transcription of DNA into RNA using the four ribonucleoside triphosphates as substrates. The polypeptide is DNA-directed RNA polymerase subunit beta (Bacillus pumilus (strain SAFR-032)).